The sequence spans 210 residues: Endonuclease III (210 aa).

One can recognise a HhH domain in the interval Phe108–Asn127. Cys187, Cys194, Cys197, and Cys203 together coordinate [4Fe-4S] cluster.

The protein belongs to the Nth/MutY family. [4Fe-4S] cluster serves as cofactor.

The catalysed reaction is 2'-deoxyribonucleotide-(2'-deoxyribose 5'-phosphate)-2'-deoxyribonucleotide-DNA = a 3'-end 2'-deoxyribonucleotide-(2,3-dehydro-2,3-deoxyribose 5'-phosphate)-DNA + a 5'-end 5'-phospho-2'-deoxyribonucleoside-DNA + H(+). Functionally, DNA repair enzyme that has both DNA N-glycosylase activity and AP-lyase activity. The DNA N-glycosylase activity releases various damaged pyrimidines from DNA by cleaving the N-glycosidic bond, leaving an AP (apurinic/apyrimidinic) site. The AP-lyase activity cleaves the phosphodiester bond 3' to the AP site by a beta-elimination, leaving a 3'-terminal unsaturated sugar and a product with a terminal 5'-phosphate. In Rickettsia conorii (strain ATCC VR-613 / Malish 7), this protein is Endonuclease III.